The primary structure comprises 1152 residues: Integrin alpha-M (1152 aa).

The signal sequence occupies residues Met1–Gly16. Residues Phe17–Asn1104 are Extracellular-facing. FG-GAP repeat units follow at residues Asn18 to Pro75 and Ile76 to Gln135. A disulfide bridge connects residues Cys66 and Cys73. A glycan (N-linked (GlcNAc...) asparagine) is linked at Asn86. Residues Cys105 and Cys123 are joined by a disulfide bond. In terms of domain architecture, VWFA spans Asp150–Leu328. Asn240 carries an N-linked (GlcNAc...) asparagine glycan. FG-GAP repeat units follow at residues Gln339–Ile390, Asn391–Trp442, Glu443–Trp503, Asp506–Ser564, and Gln569–Arg629. The N-linked (GlcNAc...) asparagine glycan is linked to Asn391. Ca(2+) contacts are provided by Asp465, Asp467, Asn469, Asp473, Asp529, Asn531, Asp533, Asp537, Asp592, Asp596, and Asp600. Asn469 carries N-linked (GlcNAc...) asparagine glycosylation. Cys654 and Cys711 are joined by a disulfide. Residues Asn692, Asn696, and Asn734 are each glycosylated (N-linked (GlcNAc...) asparagine). Cysteines 770 and 776 form a disulfide. N-linked (GlcNAc...) asparagine glycosylation occurs at Asn801. Cys847 and Cys864 are disulfide-bonded. N-linked (GlcNAc...) asparagine glycans are attached at residues Asn880, Asn900, Asn911, Asn940, Asn946, Asn978, Asn993, and Asn1021. 2 disulfides stabilise this stretch: Cys998–Cys1022 and Cys1027–Cys1032. 3 N-linked (GlcNAc...) asparagine glycosylation sites follow: Asn1044, Asn1050, and Asn1075. Residues Pro1105–Tyr1128 traverse the membrane as a helical segment. Topologically, residues Lys1129–Gln1152 are cytoplasmic. The GFFKR motif signature appears at Gly1131–Arg1135.

This sequence belongs to the integrin alpha chain family. In terms of assembly, heterodimer of an alpha and a beta subunit. ITGAM associates with ITGB2. Found in a complex with CD177 and ITGB2/CD18. Interacts with JAM3. Interacts with THBD. Interacts with complement factor H/CFH; this interaction mediates adhesion of neutrophils to pathogens leading to pathogen clearance. Interacts with TMEM268; this interaction inhibits ITGAM degradation via the endosome-lysosome pathway. As to expression, predominantly expressed in monocytes and granulocytes. Expressed in neutrophils (at protein level).

It is found in the cell membrane. The protein resides in the membrane raft. In terms of biological role, integrin ITGAM/ITGB2 is implicated in various adhesive interactions of monocytes, macrophages and granulocytes as well as in mediating the uptake of complement-coated particles and pathogens. It is identical with CR-3, the receptor for the iC3b fragment of the third complement component. It probably recognizes the R-G-D peptide in C3b. Integrin ITGAM/ITGB2 is also a receptor for fibrinogen, factor X and ICAM1. It recognizes P1 and P2 peptides of fibrinogen gamma chain. Regulates neutrophil migration. In association with beta subunit ITGB2/CD18, required for CD177-PRTN3-mediated activation of TNF primed neutrophils. May regulate phagocytosis-induced apoptosis in extravasated neutrophils. May play a role in mast cell development. Required with TYROBP/DAP12 in microglia to control production of microglial superoxide ions which promote the neuronal apoptosis that occurs during brain development. The polypeptide is Integrin alpha-M (ITGAM) (Homo sapiens (Human)).